We begin with the raw amino-acid sequence, 264 residues long: Thiazole synthase (264 aa).

Catalysis depends on Lys98, which acts as the Schiff-base intermediate with DXP. Residues Gly159, 185–186, and 207–208 contribute to the 1-deoxy-D-xylulose 5-phosphate site; these read AG and AT.

The protein belongs to the ThiG family. As to quaternary structure, homotetramer. Forms heterodimers with either ThiH or ThiS.

It is found in the cytoplasm. It carries out the reaction [ThiS sulfur-carrier protein]-C-terminal-Gly-aminoethanethioate + 2-iminoacetate + 1-deoxy-D-xylulose 5-phosphate = [ThiS sulfur-carrier protein]-C-terminal Gly-Gly + 2-[(2R,5Z)-2-carboxy-4-methylthiazol-5(2H)-ylidene]ethyl phosphate + 2 H2O + H(+). It participates in cofactor biosynthesis; thiamine diphosphate biosynthesis. Functionally, catalyzes the rearrangement of 1-deoxy-D-xylulose 5-phosphate (DXP) to produce the thiazole phosphate moiety of thiamine. Sulfur is provided by the thiocarboxylate moiety of the carrier protein ThiS. In vitro, sulfur can be provided by H(2)S. This chain is Thiazole synthase, found in Mycobacterium ulcerans (strain Agy99).